Here is a 337-residue protein sequence, read N- to C-terminus: Ketol-acid reductoisomerase (NADP(+)) (337 aa).

In terms of domain architecture, KARI N-terminal Rossmann spans 3–183; sequence IELLYDADAD…GGARAGVIPT (181 aa). NADP(+) is bound by residues 26-29, Arg49, Ser52, Ser54, and 84-87; these read YGSQ and DTSQ. His109 is a catalytic residue. Gly135 provides a ligand contact to NADP(+). One can recognise a KARI C-terminal knotted domain in the interval 184 to 329; the sequence is TFREETETDL…SKLRDLMSWV (146 aa). Residues Asp192, Glu196, Glu228, and Glu232 each coordinate Mg(2+). Residue Ser253 coordinates substrate.

Belongs to the ketol-acid reductoisomerase family. Mg(2+) is required as a cofactor.

It catalyses the reaction (2R)-2,3-dihydroxy-3-methylbutanoate + NADP(+) = (2S)-2-acetolactate + NADPH + H(+). It carries out the reaction (2R,3R)-2,3-dihydroxy-3-methylpentanoate + NADP(+) = (S)-2-ethyl-2-hydroxy-3-oxobutanoate + NADPH + H(+). The protein operates within amino-acid biosynthesis; L-isoleucine biosynthesis; L-isoleucine from 2-oxobutanoate: step 2/4. Its pathway is amino-acid biosynthesis; L-valine biosynthesis; L-valine from pyruvate: step 2/4. In terms of biological role, involved in the biosynthesis of branched-chain amino acids (BCAA). Catalyzes an alkyl-migration followed by a ketol-acid reduction of (S)-2-acetolactate (S2AL) to yield (R)-2,3-dihydroxy-isovalerate. In the isomerase reaction, S2AL is rearranged via a Mg-dependent methyl migration to produce 3-hydroxy-3-methyl-2-ketobutyrate (HMKB). In the reductase reaction, this 2-ketoacid undergoes a metal-dependent reduction by NADPH to yield (R)-2,3-dihydroxy-isovalerate. This chain is Ketol-acid reductoisomerase (NADP(+)), found in Corynebacterium diphtheriae (strain ATCC 700971 / NCTC 13129 / Biotype gravis).